Here is a 331-residue protein sequence, read N- to C-terminus: Peroxidase 69 (331 aa).

The N-terminal stretch at 1-23 (MGRGYNLLFVLVTFLVLVAAVTA) is a signal peptide. Disulfide bonds link Cys-46/Cys-122, Cys-79/Cys-84, Cys-128/Cys-327, and Cys-205/Cys-237. Residue His-77 is the Proton acceptor of the active site. Asp-78, Val-81, Gly-83, Asp-85, and Ser-87 together coordinate Ca(2+). N-linked (GlcNAc...) asparagine glycosylation is present at Asn-93. Pro-168 serves as a coordination point for substrate. Residue His-198 participates in heme b binding. A Ca(2+)-binding site is contributed by Thr-199. The N-linked (GlcNAc...) asparagine glycan is linked to Asn-216. The Ca(2+) site is built by Asp-248, Ser-251, and Asp-256.

Belongs to the peroxidase family. Classical plant (class III) peroxidase subfamily. The cofactor is heme b. Ca(2+) serves as cofactor. In terms of tissue distribution, mainly expressed in roots and slightly in leaves.

The protein localises to the secreted. It carries out the reaction 2 a phenolic donor + H2O2 = 2 a phenolic radical donor + 2 H2O. In terms of biological role, removal of H(2)O(2), oxidation of toxic reductants, biosynthesis and degradation of lignin, suberization, auxin catabolism, response to environmental stresses such as wounding, pathogen attack and oxidative stress. These functions might be dependent on each isozyme/isoform in each plant tissue. The sequence is that of Peroxidase 69 (PER69) from Arabidopsis thaliana (Mouse-ear cress).